The following is a 104-amino-acid chain: MEQEKIRIKLRAYDHRLLDQSVKQIIETVKRTGGVVKGPIPLPTRKRKWCVLRSPHKFDQSREHFEIREFSRILDIIRFTPQTIEALMEISLPAGVDVEVKMRG.

It belongs to the universal ribosomal protein uS10 family. As to quaternary structure, part of the 30S ribosomal subunit.

Involved in the binding of tRNA to the ribosomes. This chain is Small ribosomal subunit protein uS10, found in Aquifex aeolicus (strain VF5).